A 95-amino-acid chain; its full sequence is Progonadoliberin-1 (95 aa).

The N-terminal stretch at methionine 1–cysteine 22 is a signal peptide. Glutamine 23 is modified (pyrrolidone carboxylic acid). The residue at position 32 (glycine 32) is a Glycine amide.

Belongs to the GnRH family.

It localises to the secreted. Functionally, stimulates the secretion of gonadotropins. The protein is Progonadoliberin-1 (gnrh1) of Morone saxatilis (Striped bass).